The following is a 168-amino-acid chain: RxLR effector protein PITG_12737 (168 aa).

The N-terminal stretch at 1–20 (MRACAILVVAAAAVLTGSTA) is a signal peptide. The RxLR-dEER signature appears at 54-77 (RRLRKHKTVNTNSEMEYESEAEAR).

The protein belongs to the RxLR effector family.

Its subcellular location is the secreted. The protein localises to the host nucleus. It localises to the host cytoplasm. Its function is as follows. Effector that enhances P.infestans colonization of Nicotiana benthamiana leaves. The chain is RxLR effector protein PITG_12737 from Phytophthora infestans (strain T30-4) (Potato late blight agent).